The sequence spans 252 residues: NAD(P)H-quinone oxidoreductase subunit K (252 aa).

[4Fe-4S] cluster contacts are provided by cysteine 73, cysteine 74, cysteine 138, and cysteine 169. Over residues 225–236 (ASTQKQALSPSQ) the composition is skewed to polar residues. Positions 225–252 (ASTQKQALSPSQEIPLEDQNEATKEIAQ) are disordered.

It belongs to the complex I 20 kDa subunit family. In terms of assembly, NDH-1 can be composed of about 15 different subunits; different subcomplexes with different compositions have been identified which probably have different functions. [4Fe-4S] cluster serves as cofactor.

The protein localises to the cellular thylakoid membrane. The enzyme catalyses a plastoquinone + NADH + (n+1) H(+)(in) = a plastoquinol + NAD(+) + n H(+)(out). It catalyses the reaction a plastoquinone + NADPH + (n+1) H(+)(in) = a plastoquinol + NADP(+) + n H(+)(out). NDH-1 shuttles electrons from an unknown electron donor, via FMN and iron-sulfur (Fe-S) centers, to quinones in the respiratory and/or the photosynthetic chain. The immediate electron acceptor for the enzyme in this species is believed to be plastoquinone. Couples the redox reaction to proton translocation, and thus conserves the redox energy in a proton gradient. Cyanobacterial NDH-1 also plays a role in inorganic carbon-concentration. This Prochlorococcus marinus (strain MIT 9211) protein is NAD(P)H-quinone oxidoreductase subunit K.